The chain runs to 846 residues: Outer membrane channel protein CpnT (846 aa).

Residues 1–443 (MAPLAVDPAA…AGVRGLKERL (443 aa)) form an NTD region. The segment at 442–630 (RLEPTTPHLE…SGSEPPGLHA (189 aa)) is disordered. Pro residues-rich tracts occupy residues 450–466 (LEPP…PPRI) and 475–504 (APAP…PPVD). Low complexity-rich tracts occupy residues 508-517 (EPVAPSSASA) and 562-586 (APAT…HSTP). The segment at 651 to 846 (RLSDEAVDPQ…ELIRRGVLRQ (196 aa)) is TNT. In terms of domain architecture, TNT spans 751-846 (YGPQLDRIGG…ELIRRGVLRQ (96 aa)). Residue Arg757 is part of the active site. Arg780 is an NAD(+) binding site. Gln822 is a catalytic residue.

Interacts with the immunity factor for TNT (IFT) homolog. Post-translationally, the C-terminal domain (TNT) is probably cleaved.

Its subcellular location is the cell outer membrane. The protein localises to the secreted. It localises to the cell surface. The enzyme catalyses NAD(+) + H2O = ADP-D-ribose + nicotinamide + H(+). Its activity is regulated as follows. Glycohydrolase activity is completely inhibited by interaction with the immunity factor for TNT (IFT) homolog. This inhibition protects M.bovis from self-poisoning. Its function is as follows. The N-terminal domain (NTD) forms an outer membrane channel and is used for uptake of nutrients across the outer membrane. Also confers susceptibility to structurally different antibiotics and antituberculosis drugs, and to toxic immune factors such as nitric oxide (NO). The C-terminal domain (TNT) is dispensable for normal growth in macrophages. The chain is Outer membrane channel protein CpnT from Mycobacterium bovis (strain BCG / Pasteur 1173P2).